Consider the following 225-residue polypeptide: Tryptophan synthase beta chain (225 aa).

Belongs to the TrpB family. As to quaternary structure, tetramer of two alpha and two beta chains. Pyridoxal 5'-phosphate is required as a cofactor.

It carries out the reaction (1S,2R)-1-C-(indol-3-yl)glycerol 3-phosphate + L-serine = D-glyceraldehyde 3-phosphate + L-tryptophan + H2O. It functions in the pathway amino-acid biosynthesis; L-tryptophan biosynthesis; L-tryptophan from chorismate: step 5/5. In terms of biological role, the beta subunit is responsible for the synthesis of L-tryptophan from indole and L-serine. The polypeptide is Tryptophan synthase beta chain (trpB) (Buchnera aphidicola subsp. Rhopalosiphum maidis).